The chain runs to 540 residues: Glucose-6-phosphate isomerase (540 aa).

The active-site Proton donor is the E350. Catalysis depends on residues H381 and K503.

It belongs to the GPI family.

The protein localises to the cytoplasm. The catalysed reaction is alpha-D-glucose 6-phosphate = beta-D-fructose 6-phosphate. It functions in the pathway carbohydrate biosynthesis; gluconeogenesis. Its pathway is carbohydrate degradation; glycolysis; D-glyceraldehyde 3-phosphate and glycerone phosphate from D-glucose: step 2/4. Catalyzes the reversible isomerization of glucose-6-phosphate to fructose-6-phosphate. In Burkholderia mallei (strain NCTC 10247), this protein is Glucose-6-phosphate isomerase.